The primary structure comprises 502 residues: Nucleoside transporter 2 (502 aa).

Over 1-30 (MTTSSDSAMVNHTPSPWYKFGFKSFAEFNT) the chain is Cytoplasmic. A helical membrane pass occupies residues 31–51 (YVTFVFLGMSIMMVASAVTSA). Topologically, residues 52 to 81 (PDFLTRYYVYATGDPDAVAETPLFWNNANT) are extracellular. A helical transmembrane segment spans residues 82–102 (FYNAGTYVLQVLTELFSLTPF). The Cytoplasmic segment spans residues 103–111 (MRRIPLSVR). The chain crosses the membrane as a helical span at residues 112–132 (LFVGLGIPFAELLLIIIVPAA). Residues 133-137 (TIKSQ) lie on the Extracellular side of the membrane. The helical transmembrane segment at 138–158 (HGAIAVIMVVACVGGFSKALC) threads the bilayer. Residues 159-178 (DSCTNALVGPFPTKFMNGAQ) are Cytoplasmic-facing. A helical transmembrane segment spans residues 179–199 (WGLTVIALLMSIIQIILKVSM). The Extracellular segment spans residues 200–210 (GTSFHDILTMS). Residues 211–231 (RIYFGICIGIQLFAIFELAIL) form a helical membrane-spanning segment. Over 232 to 352 (RFNPFAQKYI…SVFKRVYPML (121 aa)) the chain is Cytoplasmic. Residues 252–273 (AQNNESTLEETAPSMNEPAAGD) are disordered. The chain crosses the membrane as a helical span at residues 353–373 (VCVFLIYFTSLLTFPGVFFLV). At 374-380 (STTSGWY) the chain is on the extracellular side. A helical membrane pass occupies residues 381 to 401 (MTVIVTLFNAGDFISRMVLMF). Over 402-408 (RPLRPSP) the chain is Cytoplasmic. Residues 409–429 (KVVVAGTLGRLIIIPFLVLCV) traverse the membrane as a helical segment. The Extracellular segment spans residues 430-436 (RGIIRGE). The chain crosses the membrane as a helical span at residues 437–457 (ALPYVLITLLGLTNGYFGCMA). The Cytoplasmic portion of the chain corresponds to 458–477 (CIHCPRTTTLRYAGERSLAA). Residues 478-498 (MLSGISIMLGLCFGSNLSLAI) traverse the membrane as a helical segment. Over 499 to 502 (TLTH) the chain is Extracellular.

The protein belongs to the SLC29A/ENT transporter (TC 2.A.57) family.

The protein localises to the cell membrane. It catalyses the reaction inosine(in) = inosine(out). It carries out the reaction guanosine(in) = guanosine(out). Its function is as follows. High affinity transporter for inosine and guanosine. This Crithidia fasciculata protein is Nucleoside transporter 2.